The sequence spans 124 residues: Small ribosomal subunit protein uS13 (124 aa).

The tract at residues 98 to 124 is disordered; that stretch reads VRGQRTKTNARTRKGPKRTIAGKKKAR.

Belongs to the universal ribosomal protein uS13 family. As to quaternary structure, part of the 30S ribosomal subunit. Forms a loose heterodimer with protein S19. Forms two bridges to the 50S subunit in the 70S ribosome.

Functionally, located at the top of the head of the 30S subunit, it contacts several helices of the 16S rRNA. In the 70S ribosome it contacts the 23S rRNA (bridge B1a) and protein L5 of the 50S subunit (bridge B1b), connecting the 2 subunits; these bridges are implicated in subunit movement. Contacts the tRNAs in the A and P-sites. The protein is Small ribosomal subunit protein uS13 of Mycobacterium leprae (strain Br4923).